Consider the following 110-residue polypeptide: GIFPYNVPEGQHDPAYLQALQQQALHYINLQQVPDLQLHRARELEVIAKNPTAYHPGYNYAGHYYPGNYYSGYYHPGHYYTALHHNAALHQHSLNEQKVINEQKALIAGQ.

The sequence is that of Cuticle protein 13 from Limulus polyphemus (Atlantic horseshoe crab).